Consider the following 265-residue polypeptide: MSRLSTIFTQLPVGKKVFIPFITAGDSGLDNTFELMQVLVKNGADVIELGVPFSDPIADGPIIAKSHERAVADGVGLCDVLSLVKKFRQSNDTTAIVLMGYLNPIEAFGYQAFANAASESAVDGVLVVDMPPEEAHDLKRSLDDVNIDLIFLVALTTTDERLAFLATIASGFIYFISLKGVTGAEHLDVDLVKMYLLRVRKMINLPIGVGFGIKNAKSAKAVSKYADAVIVGSLLVAFVEQYANDRNKMLANVGYFADEISTAIK.

Active-site proton acceptor residues include Glu-48 and Asp-59.

It belongs to the TrpA family. Tetramer of two alpha and two beta chains.

The enzyme catalyses (1S,2R)-1-C-(indol-3-yl)glycerol 3-phosphate + L-serine = D-glyceraldehyde 3-phosphate + L-tryptophan + H2O. It participates in amino-acid biosynthesis; L-tryptophan biosynthesis; L-tryptophan from chorismate: step 5/5. The alpha subunit is responsible for the aldol cleavage of indoleglycerol phosphate to indole and glyceraldehyde 3-phosphate. The chain is Tryptophan synthase alpha chain from Ruthia magnifica subsp. Calyptogena magnifica.